Here is a 174-residue protein sequence, read N- to C-terminus: Chorismate pyruvate-lyase (174 aa).

4 residues coordinate substrate: Met-36, Arg-78, Leu-116, and Glu-157.

This sequence belongs to the UbiC family. Monomer.

The protein resides in the cytoplasm. It carries out the reaction chorismate = 4-hydroxybenzoate + pyruvate. Its pathway is cofactor biosynthesis; ubiquinone biosynthesis. In terms of biological role, removes the pyruvyl group from chorismate, with concomitant aromatization of the ring, to provide 4-hydroxybenzoate (4HB) for the ubiquinone pathway. This is Chorismate pyruvate-lyase from Yersinia pestis bv. Antiqua (strain Angola).